A 1026-amino-acid chain; its full sequence is Multidrug resistance protein MdtC (1026 aa).

11 helical membrane-spanning segments follow: residues 15-35 (ILIAAAITLCGILGFRLLPVA), 333-353 (EVEETLAISVALVILVVFLFL), 360-380 (LIPAVAVPVSLIGTFAAMYLC), 387-407 (LSLMALTIATGFVVDDAIVVL), 431-451 (VGFTVISMSLSLVAVFLPLLL), 463-483 (FAVTLSVAIGISLVVSLTLTP), 528-548 (LVGVVFLGTVALNIWLYIAIP), 853-873 (LILIVAAIATVYIVLGILYES), 897-917 (LFNAPFSLIALIGIMLLIGIV), 953-973 (PIMMTTLAALFGALPLVLSGG), and 984-1004 (ITIVGGLVMSQLLTLYTTPVV).

It belongs to the resistance-nodulation-cell division (RND) (TC 2.A.6) family. MdtC subfamily. Part of a tripartite efflux system composed of MdtA, MdtB and MdtC. MdtC forms a heteromultimer with MdtB.

Its subcellular location is the cell inner membrane. The sequence is that of Multidrug resistance protein MdtC from Salmonella newport (strain SL254).